Here is a 418-residue protein sequence, read N- to C-terminus: MIDLKFLRENPDAVRESQRTRGEDPALVDALLEADASRRAAVLAGDNLRAEQKAFGKKVGQASPEERPALLEGSKELAAKVKQAEAGQHEAQAALDAAHRAISNIVQDGAPAGGEDDFITLETVGEIPAFDFEPKDHLELGESLGLIDMERGAKVSGARFYFLTGFGAMLQLGMLQLAAQKAMANGFQMMIPPVLVRPEIMAGTGFLGAHSDEIYHLADDDLYLVGTSEVPLAGYHSGEILDLADGPKRYAGWSTCFRREAGSYGKDTRGIIRVHQFDKVEMFTYCKPEDADAEHQRLLAWERDMLAAIDVPYRVIDVAGGDLGSSAARKFDCEAWVPTQQAYRELTSTSNCTTFQARRLGVRYRDENGKPQTAATLNGTLATTRWIVAILENHQQSDGTVRVPEALVPFVGTDVLKP.

Position 227–229 (227–229 (TSE)) interacts with L-serine. ATP contacts are provided by residues 258–260 (RRE) and V274. E281 serves as a coordination point for L-serine. 345 to 348 (ELTS) contributes to the ATP binding site. Residue T380 participates in L-serine binding.

It belongs to the class-II aminoacyl-tRNA synthetase family. Type-1 seryl-tRNA synthetase subfamily. Homodimer. The tRNA molecule binds across the dimer.

The protein resides in the cytoplasm. The enzyme catalyses tRNA(Ser) + L-serine + ATP = L-seryl-tRNA(Ser) + AMP + diphosphate + H(+). The catalysed reaction is tRNA(Sec) + L-serine + ATP = L-seryl-tRNA(Sec) + AMP + diphosphate + H(+). It participates in aminoacyl-tRNA biosynthesis; selenocysteinyl-tRNA(Sec) biosynthesis; L-seryl-tRNA(Sec) from L-serine and tRNA(Sec): step 1/1. In terms of biological role, catalyzes the attachment of serine to tRNA(Ser). Is also able to aminoacylate tRNA(Sec) with serine, to form the misacylated tRNA L-seryl-tRNA(Sec), which will be further converted into selenocysteinyl-tRNA(Sec). In Rhodococcus opacus (strain B4), this protein is Serine--tRNA ligase.